Reading from the N-terminus, the 941-residue chain is Cilia- and flagella-associated protein 69 (941 aa).

The segment covering 1–14 has biased composition (low complexity); it reads MWTEEAGATAEAQE. Residues 1–26 form a disordered region; the sequence is MWTEEAGATAEAQESGIRNKSSSSSQ. Polar residues predominate over residues 16–26; sequence GIRNKSSSSSQ.

As to expression, highly expressed in the testis, specifically in sperm (at protein level). Expressed in the brain, kidney, liver, lung, and intestine.

Its subcellular location is the cell projection. The protein resides in the cilium. The protein localises to the flagellum. Its function is as follows. Cilium- and flagellum-associated protein. In the olfactory epithelium, regulates the speed of activation and termination of the odor response and thus contributes to the robustness of olfactory transduction pathways. Required for sperm flagellum assembly and stability. The sequence is that of Cilia- and flagella-associated protein 69 from Homo sapiens (Human).